Reading from the N-terminus, the 215-residue chain is uncharacterized protein (215 aa).

The tract at residues 120 to 147 (HRAPQGTSSYQEGRRAHEATSAESDDDN) is disordered.

This is an uncharacterized protein from Homo sapiens (Human).